A 205-amino-acid polypeptide reads, in one-letter code: MTEPDPAAAEQRPSVGRNLPTFQDLPIPADTANLREGPDLNAAMLALLPLVGVWRGEGEGRDTDGDYRFGQQIVVAHDGSDYLTWDARSWRLDADGQFEQLTLRETGFWRFAPDPNDPDENQAIELVLAHAAGFVELFYGQPLNASSWELVTDALARSKSGALIGGAKRLYGIVDGGDLAYVEERVGADGGLEPHLSARLSRFAG.

Positions M1 to Q23 are disordered. Positions G52–G58 match the GXWXGXG motif. Residues T63, K168, and H195 each contribute to the heme b site.

Belongs to the nitrobindin family. In terms of assembly, homodimer. Heme b serves as cofactor.

It carries out the reaction peroxynitrite = nitrate. It participates in nitrogen metabolism. In terms of biological role, heme-binding protein able to scavenge peroxynitrite and to protect free L-tyrosine against peroxynitrite-mediated nitration, by acting as a peroxynitrite isomerase that converts peroxynitrite to nitrate. Therefore, this protein likely plays a role in peroxynitrite sensing and in the detoxification of reactive nitrogen and oxygen species (RNS and ROS, respectively). Is able to bind nitric oxide (NO) in vitro, but may act as a sensor of peroxynitrite levels in vivo. This Mycobacteroides abscessus (strain ATCC 19977 / DSM 44196 / CCUG 20993 / CIP 104536 / JCM 13569 / NCTC 13031 / TMC 1543 / L948) (Mycobacterium abscessus) protein is Peroxynitrite isomerase.